We begin with the raw amino-acid sequence, 217 residues long: uncharacterized protein (217 aa).

The next 4 membrane-spanning stretches (helical) occupy residues 9–29, 54–74, 103–125, and 135–157; these read ISLA…LSTI, FLST…LLEL, LMAY…RFLS, and IVFW…ASYI.

This sequence belongs to the DP1 family.

The protein resides in the endoplasmic reticulum membrane. This is an uncharacterized protein from Schizosaccharomyces pombe (strain 972 / ATCC 24843) (Fission yeast).